The chain runs to 156 residues: Cell division protein SepF (156 aa).

The interval 17 to 44 is disordered; the sequence is PETADYYEDQQPAQQAPAPVPTPAPTRS.

The protein belongs to the SepF family. As to quaternary structure, homodimer. Interacts with FtsZ.

The protein resides in the cytoplasm. Its function is as follows. Cell division protein that is part of the divisome complex and is recruited early to the Z-ring. Probably stimulates Z-ring formation, perhaps through the cross-linking of FtsZ protofilaments. Its function overlaps with FtsA. The polypeptide is Cell division protein SepF (Limosilactobacillus fermentum (strain NBRC 3956 / LMG 18251) (Lactobacillus fermentum)).